The chain runs to 122 residues: uncharacterized protein (122 aa).

Transmembrane regions (helical) follow at residues 43 to 63 (PIII…IFFI) and 76 to 96 (AVAD…ILYF).

The protein localises to the membrane. This is an uncharacterized protein from Schizosaccharomyces pombe (strain 972 / ATCC 24843) (Fission yeast).